Reading from the N-terminus, the 89-residue chain is Large ribosomal subunit protein bL27 (89 aa).

A disordered region spans residues 1 to 21 (MAHKKAGGSSRNGRDTEGRRL).

It belongs to the bacterial ribosomal protein bL27 family.

This chain is Large ribosomal subunit protein bL27, found in Granulibacter bethesdensis (strain ATCC BAA-1260 / CGDNIH1).